Reading from the N-terminus, the 431-residue chain is GTPase Obg (431 aa).

The 158-residue stretch at 1 to 158 folds into the Obg domain; it reads MFVDQVKISL…IEVTLELKLL (158 aa). The disordered stretch occupies residues 118–144; sequence KGGRGGRGNSRFASPRNPAPDFSENGE. The region spanning 159 to 330 is the OBG-type G domain; that stretch reads ADVGLVGFPS…LLYAIADKLE (172 aa). Residues 165-172, 190-194, 212-215, 282-285, and 311-313 contribute to the GTP site; these read GFPSVGKS, FTTIK, DLPG, NKMD, and STF. Mg(2+) is bound by residues S172 and T192. In terms of domain architecture, OCT spans 353 to 431; that stretch reads KHTPSQDKFT…ILGGEFEFVE (79 aa).

It belongs to the TRAFAC class OBG-HflX-like GTPase superfamily. OBG GTPase family. In terms of assembly, monomer. Requires Mg(2+) as cofactor.

Its subcellular location is the cytoplasm. In terms of biological role, an essential GTPase which binds GTP, GDP and possibly (p)ppGpp with moderate affinity, with high nucleotide exchange rates and a fairly low GTP hydrolysis rate. Plays a role in control of the cell cycle, stress response, ribosome biogenesis and in those bacteria that undergo differentiation, in morphogenesis control. This Staphylococcus saprophyticus subsp. saprophyticus (strain ATCC 15305 / DSM 20229 / NCIMB 8711 / NCTC 7292 / S-41) protein is GTPase Obg.